Consider the following 343-residue polypeptide: Holliday junction branch migration complex subunit RuvB (343 aa).

Residues 1–182 are large ATPase domain (RuvB-L); sequence MTDPIPLHTP…FGIPVRLNFY (182 aa). Positions 21, 22, 63, 66, 67, 68, 172, 182, and 219 each coordinate ATP. Thr67 provides a ligand contact to Mg(2+). The small ATPAse domain (RuvB-S) stretch occupies residues 183 to 253; the sequence is TEEELEKVVT…IADAALTRLE (71 aa). The head domain (RuvB-H) stretch occupies residues 256–343; it reads GLGLDAMDRR…SQTGLFDGKS (88 aa). The DNA site is built by Arg292, Arg311, and Arg316.

This sequence belongs to the RuvB family. In terms of assembly, homohexamer. Forms an RuvA(8)-RuvB(12)-Holliday junction (HJ) complex. HJ DNA is sandwiched between 2 RuvA tetramers; dsDNA enters through RuvA and exits via RuvB. An RuvB hexamer assembles on each DNA strand where it exits the tetramer. Each RuvB hexamer is contacted by two RuvA subunits (via domain III) on 2 adjacent RuvB subunits; this complex drives branch migration. In the full resolvosome a probable DNA-RuvA(4)-RuvB(12)-RuvC(2) complex forms which resolves the HJ.

The protein resides in the cytoplasm. The catalysed reaction is ATP + H2O = ADP + phosphate + H(+). In terms of biological role, the RuvA-RuvB-RuvC complex processes Holliday junction (HJ) DNA during genetic recombination and DNA repair, while the RuvA-RuvB complex plays an important role in the rescue of blocked DNA replication forks via replication fork reversal (RFR). RuvA specifically binds to HJ cruciform DNA, conferring on it an open structure. The RuvB hexamer acts as an ATP-dependent pump, pulling dsDNA into and through the RuvAB complex. RuvB forms 2 homohexamers on either side of HJ DNA bound by 1 or 2 RuvA tetramers; 4 subunits per hexamer contact DNA at a time. Coordinated motions by a converter formed by DNA-disengaged RuvB subunits stimulates ATP hydrolysis and nucleotide exchange. Immobilization of the converter enables RuvB to convert the ATP-contained energy into a lever motion, pulling 2 nucleotides of DNA out of the RuvA tetramer per ATP hydrolyzed, thus driving DNA branch migration. The RuvB motors rotate together with the DNA substrate, which together with the progressing nucleotide cycle form the mechanistic basis for DNA recombination by continuous HJ branch migration. Branch migration allows RuvC to scan DNA until it finds its consensus sequence, where it cleaves and resolves cruciform DNA. The sequence is that of Holliday junction branch migration complex subunit RuvB from Erythrobacter litoralis (strain HTCC2594).